The sequence spans 1097 residues: RE1-silencing transcription factor (1097 aa).

The segment at 32–122 (DLHDLSKAEL…SLELSVVEPQ (91 aa)) is interaction with SIN3A. An interaction with SIN3B region spans residues 43–57 (APQLIMLANVALTGE). Disordered stretches follow at residues 83–103 (NFSDSEEGEGLEESADIKGEP) and 127–159 (ASGAPDIYSSNKDLPPETPGAEDKGKSSKTKPF). Residues 86-96 (DSEEGEGLEES) show a composition bias toward acidic residues. An interaction with ZFP90 region spans residues 145-418 (PGAEDKGKSS…KSKHPTCPNK (274 aa)). The C2H2-type 1 zinc-finger motif lies at 159 to 181 (FRCKPCQYEAESEEQFVHHIRVH). The tract at residues 201–212 (SGSSTAEEGDFS) is required for binding to the neuron-restrictive silencer element. 7 consecutive C2H2-type zinc fingers follow at residues 216-238 (IRCDRCGYNTNRYDHYTAHLKHH), 248-270 (YKCIICTYTTVSEYHWRKHLRNH), 276-298 (YTCGKCNYFSDRKNNYVQHVRTH), 304-326 (YKCELCPYSSSQKTHLTRHMRTH), 332-355 (FKCDQCSYVASNQHEVTRHARQVH), 361-383 (LNCPHCDYKTADRSNFKKHVELH), and 389-412 (FNCPVCDYAASKKCNLQYHFKSKH). Positions 452 to 479 (KIKGDVAGKKNEKSVKAEKRDVSKEKKP) are enriched in basic and acidic residues. Disordered regions lie at residues 452 to 642 (KIKG…MEGA), 774 to 837 (KEPV…EQVL), 853 to 938 (ESVS…NGKH), and 961 to 1049 (GINS…NAKE). Residues 480-490 (SNNVSVIQVTT) show a composition bias toward polar residues. Composition is skewed to basic and acidic residues over residues 495–504 (SVTEVKEMDV) and 559–570 (PKGDSKVEENKK). Positions 577–593 (KSTKKKTLKNKSSKKSS) are enriched in basic residues. Residues 803 to 836 (PPLHMEPISKKPPLRKDKKEKSNMQSERARKEQV) show a composition bias toward basic and acidic residues. Serine 864 carries the phosphoserine modification. Polar residues predominate over residues 913 to 930 (INESTHISSSGQNLNTPE). Serine 971 carries the phosphoserine modification. Positions 1009–1087 (EGIHSHEGSD…HLNRHLVNVY (79 aa)) are interaction with RCOR1. The C2H2-type 9 zinc-finger motif lies at 1060–1082 (FVCIFCDRSFRKGKDYSKHLNRH).

As to quaternary structure, isoform 1 and isoform 3 form heterodimers. Isoform 3: Forms homodimers and homooligomers; binds to the neuron-restrictive silencer element (NRSE) as monomer. Interacts with SIN3A, SIN3B and RCOR1. Interacts with CDYL. Interacts with EHMT1 and EHMT2 only in the presence of CDYL. Part of a complex containing at least CDYL, REST, WIZ, SETB1, EHMT1 and EHMT2. Interacts (via zinc-finger DNA-binding domain) with ZFP90 (via N- and C-termini); the interaction inhibits REST repressor activity. Interacts (via C2H2-type zinc finger 5) with PRICKLE1. Interacts with FBXW11 and BTRC. Interacts with USP7. O-glycosylated. Post-translationally, phosphorylated; phosphorylation is required for ubiquitination. In terms of processing, ubiquitinated; ubiquitination is mediated by BTRC and leads to proteasomal degradation in G2 phase. Ubiquitination increases during neuronal differentiation. Deubiquitinated by USP7; leading to its stabilization and promoting the maintenance of neural progenitor cells. In terms of tissue distribution, expressed in neurons of the prefrontal cortex, in hippocampal pyramidal neurons, dentate gyrus granule neurons and cerebellar Purkinje and granule neurons (at protein level). Expressed in dopaminergic neurons of the substantia nigra (at protein level). Expressed in neural progenitor cells (at protein level). In patients suffering from Alzheimer disease, frontotemporal dementia or dementia with Lewy bodies, decreased nuclear levels have been observed in neurons of the prefrontal cortex and the hippocampus, but not in neurons of the dentate gyrus and cerebellum (at protein level). In patients with Parkinson disease or dementia with Lewy bodies, decreased nuclear levels have been observed in dopaminergic neurons and in cortical neurons and localization to Lewy bodies and pale bodies was detected (at protein level). Expressed at higher levels in weakly invasive breast cancer cell lines and at lower levels in highly invasive breast cancer lines (at protein level). Ubiquitous. Expressed at higher levels in the tissues of the lymphocytic compartment, including spleen, thymus, peripheral blood lymphocytes and ovary.

The protein localises to the nucleus. It localises to the cytoplasm. Transcriptional repressor which binds neuron-restrictive silencer element (NRSE) and represses neuronal gene transcription in non-neuronal cells. Restricts the expression of neuronal genes by associating with two distinct corepressors, SIN3A and RCOR1, which in turn recruit histone deacetylase to the promoters of REST-regulated genes. Mediates repression by recruiting the BHC complex at RE1/NRSE sites which acts by deacetylating and demethylating specific sites on histones, thereby acting as a chromatin modifier. Transcriptional repression by REST-CDYL via the recruitment of histone methyltransferase EHMT2 may be important in transformation suppression. Represses the expression of SRRM4 in non-neural cells to prevent the activation of neural-specific splicing events and to prevent production of REST isoform 3. Repressor activity may be inhibited by forming heterodimers with isoform 3, thereby preventing binding to NRSE or binding to corepressors and leading to derepression of target genes. Also maintains repression of neuronal genes in neural stem cells, and allows transcription and differentiation into neurons by dissociation from RE1/NRSE sites of target genes. Thereby is involved in maintaining the quiescent state of adult neural stem cells and preventing premature differentiation into mature neurons. Plays a role in the developmental switch in synaptic NMDA receptor composition during postnatal development, by repressing GRIN2B expression and thereby altering NMDA receptor properties from containing primarily GRIN2B to primarily GRIN2A subunits. Acts as a regulator of osteoblast differentiation. Key repressor of gene expression in hypoxia; represses genes in hypoxia by direct binding to an RE1/NRSE site on their promoter regions. May also function in stress resistance in the brain during aging; possibly by regulating expression of genes involved in cell death and in the stress response. Repressor of gene expression in the hippocampus after ischemia by directly binding to RE1/NRSE sites and recruiting SIN3A and RCOR1 to promoters of target genes, thereby promoting changes in chromatin modifications and ischemia-induced cell death. After ischemia, might play a role in repression of miR-132 expression in hippocampal neurons, thereby leading to neuronal cell death. Negatively regulates the expression of SRRM3 in breast cancer cell lines. In terms of biological role, binds to the 3' region of the neuron-restrictive silencer element (NRSE), with lower affinity than full-length REST isoform 1. Exhibits weaker repressor activity compared to isoform 1. May negatively regulate the repressor activity of isoform 1 by binding to isoform 1, thereby preventing its binding to NRSE and leading to derepression of target genes. However, in another study, does not appear to be implicated in repressor activity of a NRSE motif-containing reporter construct nor in inhibitory activity on the isoform 1 transcriptional repressor activity. Post-transcriptional inactivation of REST by SRRM4-dependent alternative splicing into isoform 3 is required in mechanosensory hair cells in the inner ear for derepression of neuronal genes and hearing. The sequence is that of RE1-silencing transcription factor (REST) from Homo sapiens (Human).